The chain runs to 414 residues: Histidine--tRNA ligase (414 aa).

It belongs to the class-II aminoacyl-tRNA synthetase family. In terms of assembly, homodimer.

The protein resides in the cytoplasm. It carries out the reaction tRNA(His) + L-histidine + ATP = L-histidyl-tRNA(His) + AMP + diphosphate + H(+). This chain is Histidine--tRNA ligase (hisS), found in Mycoplasma genitalium (strain ATCC 33530 / DSM 19775 / NCTC 10195 / G37) (Mycoplasmoides genitalium).